The chain runs to 775 residues: MASLIYRQLLTNSYTVELSDEIQEIGSTKTQDVTVNPGPFAQTNYAPVNWGPGETNDSTTVEPVLDGPYQPTTFNPPVSYWMLLAPTNAGVVVEGTNNTNRWLATILIEPNVQQVERTYTLFGQQVQVTVSNDSQTKWKFVDLSKQTQDGNYSQHGSLLSTPKLYGVMKHGGKIYTYNGETPNATTGYYSTTNFDTVNMTAYCDFYIIPLAQEAKCTEYINNGLPPIQNTRNIVPVSIVSRNIVYTRAQPNQDIVVSKTSLWKEMQYNRDIVIRFKFANSIIKSGGLGYKWSEVSFKPANYQYTYTRDGEEVTAHTTCSVNGINDFNYNGGSLPTDFVISKYEVIKENSFVYIDYWDDSQAFRNMVNVRSLAADLNSVMCTGGDYSFALPVGNYPVMTGGAVSLHSAGVTLSTQFTDFVSLNSLRFRFRLSVEEPPFSILRTRVSGLYGLPAARPNNSQEYYEIAGRFSLISLVPSNDDYQTPIINSVTVRQDLERQLGELRDEFNNLSQQIAMSQLIDLALLPLDMFSMFSGIKSTIDAAKSMATNVMKRFKKSSLANSVSTLTNSLSDAASSISRSASVRSVSSTASAWTEVSNITSDINVTTSSISTQTSTISRRLRLKEMATQTDGMNFDDISAAVLKTKIDKSTQLNTNTLPEIVTEASEKFIPNRAYRVKDDEVLEASTDGKYFAYKVETFEEIPFDVQKFADLVTDSPVISAIIDFKTLKNLNDNYGISRQQALNLLRSDPRVLREFINQDNPIIRNRIESLIMQCRL.

Positions leucine 65–leucine 224 are spike head. Cysteine 203 and cysteine 216 are joined by a disulfide. The tract at residues alanine 248 to aspartate 479 is spike body and stalk (antigen domain). The DGE motif; interaction with ITGA2/ITGB1 heterodimer motif lies at aspartate 308–glutamate 310. A disulfide bridge links cysteine 318 with cysteine 380. A hydrophobic; possible role in virus entry into host cell region spans residues leucine 389–valine 409. Positions tyrosine 448–leucine 450 match the YGL motif; interaction with ITGA4 motif. Positions isoleucine 484 to isoleucine 518 form a coiled coil. A spike foot region spans residues glutamine 510–leucine 775. Positions lysine 644–aspartate 646 match the KID motif; interaction with HSPA8 motif.

The protein belongs to the rotavirus VP4 family. Homotrimer. VP4 adopts a dimeric appearance above the capsid surface, while forming a trimeric base anchored inside the capsid layer. Only hints of the third molecule are observed above the capsid surface. It probably performs a series of molecular rearrangements during viral entry. Prior to trypsin cleavage, it is flexible. The priming trypsin cleavage triggers its rearrangement into rigid spikes with approximate two-fold symmetry of their protruding parts. After an unknown second triggering event, cleaved VP4 may undergo another rearrangement, in which two VP5* subunits fold back on themselves and join a third subunit to form a tightly associated trimer, shaped like a folded umbrella. Interacts with VP6. Interacts with VP7. As to quaternary structure, homotrimer. The trimer is coiled-coil stabilized by its C-terminus, however, its N-terminus, known as antigen domain or 'body', seems to be flexible allowing it to self-associate either as a dimer or a trimer. Proteolytic cleavage by trypsin results in activation of VP4 functions and greatly increases infectivity. The penetration into the host cell is dependent on trypsin treatment of VP4. It produces two peptides, VP5* and VP8* that remain associated with the virion. Cleavage of VP4 by trypsin probably occurs in vivo in the lumen of the intestine prior to infection of enterocytes. Trypsin seems to be incorporated into the three-layered viral particles but remains inactive as long as the viral outer capsid is intact and would only be activated upon the solubilization of the latter.

The protein resides in the virion. Its subcellular location is the host rough endoplasmic reticulum. It localises to the host cell membrane. It is found in the host cytoplasm. The protein localises to the host cytoskeleton. The protein resides in the host endoplasmic reticulum-Golgi intermediate compartment. Its function is as follows. Spike-forming protein that mediates virion attachment to the host epithelial cell receptors and plays a major role in cell penetration, determination of host range restriction and virulence. Rotavirus attachment and entry into the host cell probably involves multiple sequential contacts between the outer capsid proteins VP4 and VP7, and the cell receptors. It is subsequently lost, together with VP7, following virus entry into the host cell. Following entry into the host cell, low intracellular or intravesicular Ca(2+) concentration probably causes the calcium-stabilized VP7 trimers to dissociate from the virion. This step is probably necessary for the membrane-disrupting entry step and the release of VP4, which is locked onto the virion by VP7. During the virus exit from the host cell, VP4 seems to be required to target the newly formed virions to the host cell lipid rafts. Forms the spike 'foot' and 'body' and acts as a membrane permeabilization protein that mediates release of viral particles from endosomal compartments into the cytoplasm. During entry, the part of VP5* that protrudes from the virus folds back on itself and reorganizes from a local dimer to a trimer. This reorganization may be linked to membrane penetration by exposing VP5* hydrophobic region. In integrin-dependent strains, VP5* targets the integrin heterodimer ITGA2/ITGB1 for cell attachment. Functionally, forms the head of the spikes and mediates the recognition of specific host cell surface glycans. It is the viral hemagglutinin and an important target of neutralizing antibodies. In sialic acid-dependent strains, VP8* binds to host cell sialic acid, most probably a ganglioside, providing the initial contact. In some other strains, VP8* mediates the attachment to histo-blood group antigens (HBGAs) for viral entry. This chain is Outer capsid protein VP4, found in Rotavirus A (strain RVA/Cow/United States/NCDV-Lincoln/1969/G6P6[1]) (RV-A).